Consider the following 153-residue polypeptide: UPF0756 membrane protein LSEI_1366 (153 aa).

A run of 4 helical transmembrane segments spans residues 4-24 (WLFL…SLII), 52-72 (WGVT…EIGF), 85-105 (WIAI…VGLL), and 115-135 (LVFG…GPVI).

This sequence belongs to the UPF0756 family.

The protein localises to the cell membrane. In Lacticaseibacillus paracasei (strain ATCC 334 / BCRC 17002 / CCUG 31169 / CIP 107868 / KCTC 3260 / NRRL B-441) (Lactobacillus paracasei), this protein is UPF0756 membrane protein LSEI_1366.